Reading from the N-terminus, the 635-residue chain is Threonine--tRNA ligase (635 aa).

Residues 1-61 (MINIKFPDGS…NHDCELRLIT (61 aa)) form the TGS domain. The interval 242 to 533 (DHRKIGKALD…LIEHYAGNMP (292 aa)) is catalytic. 3 residues coordinate Zn(2+): C333, H384, and H510.

Belongs to the class-II aminoacyl-tRNA synthetase family. Homodimer. The cofactor is Zn(2+).

The protein localises to the cytoplasm. It catalyses the reaction tRNA(Thr) + L-threonine + ATP = L-threonyl-tRNA(Thr) + AMP + diphosphate + H(+). Catalyzes the attachment of threonine to tRNA(Thr) in a two-step reaction: L-threonine is first activated by ATP to form Thr-AMP and then transferred to the acceptor end of tRNA(Thr). Also edits incorrectly charged L-seryl-tRNA(Thr). This Francisella philomiragia subsp. philomiragia (strain ATCC 25017 / CCUG 19701 / FSC 153 / O#319-036) protein is Threonine--tRNA ligase.